The following is a 133-amino-acid chain: Small ribosomal subunit protein uS8c (133 aa).

It belongs to the universal ribosomal protein uS8 family. Part of the 30S ribosomal subunit.

Its subcellular location is the plastid. It localises to the chloroplast. In terms of biological role, one of the primary rRNA binding proteins, it binds directly to 16S rRNA central domain where it helps coordinate assembly of the platform of the 30S subunit. The chain is Small ribosomal subunit protein uS8c (rps8) from Pyropia yezoensis (Susabi-nori).